Here is a 103-residue protein sequence, read N- to C-terminus: MIFRRQLSTLIPPKVASPATLHGAPNAKRMADVVSFYKALPQGAAPALPKTANPFKLYYRKYFHPKSGKASGAPLLHLILGIFLFGYISDYQFHLKHHKNGAH.

A mitochondrion-targeting transit peptide spans Met1–Gln6.

As to quaternary structure, F-type ATP synthases have 2 components, the catalytic core F(1) and the membrane-embedded component F(0), linked together by a central stalk and a peripheral stalk. The central stalk, also called rotor shaft, is often seen as part of F(1). The peripheral stalk is seen as part of F(0). F(0) contains the membrane channel next to the rotor. F-type ATP synthases form dimers but each monomer functions independently in ATP generation. The dimer consists of 17 different polypeptides: ATP1 (subunit alpha, 3 molecules per monomer, part of F(1)), ATP2 (subunit beta, 3 copies per monomer, part of F(1)), ATP3 (subunit gamma, part of the central stalk), ATP4 (subunit b, part of the peripheral stalk), ATP5/OSCP (subunit 5/OSCP, part of the peripheral stalk), ATP6 (subunit a, part of the peripheral stalk), ATP7 (subunit d, part of the peripheral stalk), ATP8 (subunit 8, part of the peripheral stalk), OLI1 (subunit c, part of the rotor, 10 molecules per monomer), ATP14 (subunit h, part of the peripheral stalk), ATP15 (subunit epsilon, part of the central stalk), ATP16 (subunit delta, part of the central stalk), ATP17 (subunit f, part of the peripheral stalk), ATP18 (subunit i/j, part of the peripheral stalk), ATP19 (subunit k, dimer-specific, at interface between monomers), ATP20 (subunit g, at interface between monomers), TIM11 (subunit e, at interface between monomers).

Its subcellular location is the mitochondrion inner membrane. Functionally, mitochondrial membrane ATP synthase (F(1)F(0) ATP synthase or Complex V) produces ATP from ADP in the presence of a proton gradient across the membrane which is generated by electron transport complexes of the respiratory chain. F-type ATP synthases consist of two structural domains, F(1) - containing the extramembraneous catalytic core, and F(0) - containing the membrane proton channel, linked together by a central stalk and a peripheral stalk. During catalysis, ATP synthesis in the catalytic domain of F(1) is coupled via a rotary mechanism of the central stalk subunits to proton translocation. Part of the complex F(0) domain. Minor subunit located with subunit a/ATP6 in the membrane. The protein is ATP synthase subunit f, mitochondrial of Yarrowia lipolytica (strain CLIB 122 / E 150) (Yeast).